The sequence spans 442 residues: Trigger factor (442 aa).

Positions 176 to 259 (GDFISLSLYV…VNAVIEISSP (84 aa)) constitute a PPIase FKBP-type domain.

Belongs to the FKBP-type PPIase family. Tig subfamily.

It localises to the cytoplasm. The catalysed reaction is [protein]-peptidylproline (omega=180) = [protein]-peptidylproline (omega=0). Its function is as follows. Involved in protein export. Acts as a chaperone by maintaining the newly synthesized protein in an open conformation. Functions as a peptidyl-prolyl cis-trans isomerase. This is Trigger factor from Chlamydia trachomatis serovar L2 (strain ATCC VR-902B / DSM 19102 / 434/Bu).